Consider the following 432-residue polypeptide: Glutamyl-tRNA reductase (432 aa).

Substrate-binding positions include 49–52 (TCNR), Ser-107, 112–114 (ETQ), and Gln-118. The active-site Nucleophile is the Cys-50. 186–191 (GAGEMG) contacts NADP(+).

It belongs to the glutamyl-tRNA reductase family. Homodimer.

It carries out the reaction (S)-4-amino-5-oxopentanoate + tRNA(Glu) + NADP(+) = L-glutamyl-tRNA(Glu) + NADPH + H(+). The protein operates within porphyrin-containing compound metabolism; protoporphyrin-IX biosynthesis; 5-aminolevulinate from L-glutamyl-tRNA(Glu): step 1/2. Functionally, catalyzes the NADPH-dependent reduction of glutamyl-tRNA(Glu) to glutamate 1-semialdehyde (GSA). The protein is Glutamyl-tRNA reductase of Campylobacter jejuni (strain RM1221).